Reading from the N-terminus, the 88-residue chain is Putative transposase InsN for insertion sequence element IS911B (88 aa).

The protein belongs to the transposase 8 family.

Its function is as follows. Involved in the transposition of the insertion sequence IS911. The chain is Putative transposase InsN for insertion sequence element IS911B (insN2) from Escherichia coli (strain K12).